A 193-amino-acid polypeptide reads, in one-letter code: Molybdopterin synthase catalytic subunit (193 aa).

Substrate is bound by residues 118-119 (HR), Lys-134, and 141-143 (KKE). Residues 159–193 (DRTTTDGTTASSPAPATRPAKGGGCCGRKVRVNES) are disordered. Residues 163-178 (TDGTTASSPAPATRPA) are compositionally biased toward low complexity.

It belongs to the MoaE family. MOCS2B subfamily. Heterotetramer; composed of 2 small (MOCS2A) and 2 large (MOCS2B) subunits.

It localises to the cytoplasm. It carries out the reaction 2 [molybdopterin-synthase sulfur-carrier protein]-C-terminal-Gly-aminoethanethioate + cyclic pyranopterin phosphate + H2O = molybdopterin + 2 [molybdopterin-synthase sulfur-carrier protein]-C-terminal Gly-Gly + 2 H(+). It participates in cofactor biosynthesis; molybdopterin biosynthesis. Its function is as follows. Catalytic subunit of the molybdopterin synthase complex, a complex that catalyzes the conversion of precursor Z into molybdopterin. Acts by mediating the incorporation of 2 sulfur atoms from thiocarboxylated MOCS2A into precursor Z to generate a dithiolene group. The chain is Molybdopterin synthase catalytic subunit from Oryza sativa subsp. japonica (Rice).